The sequence spans 297 residues: MSAVEAPSASQAIWPELTEDHPLSQLNSRLPTILSEAGHSQIWGVTLTYSTPPTFSTLIILQKFLRSVDNNVDEAATALGKTLKWRKDWGLDAPADKKEKENFGPDFEGLGYVTKIKKNDGGDEIVTWNVYGAVKDLKSTFGDLDRFLRWRVNLMEEAIAHLHLATTSTPIPDFNAGIDPHRMAQVHLYEGVSFLRMDPHVKAASKATIELMAANYPELLSRKFFVGVPLIMSWMFQAVRMFVSAETAKKFVVISYKENLANELGELEGVPKEYGGKGLSLGELQNQLRGEDAVTSS.

A CRAL-TRIO domain is found at 106 to 282 (DFEGLGYVTK…EYGGKGLSLG (177 aa)). Positions 131, 151, 187, 189, and 223 each coordinate heme.

This sequence belongs to the SFH5 family. Heme b serves as cofactor.

The protein resides in the cytoplasm. It is found in the endoplasmic reticulum membrane. The protein localises to the microsome membrane. It carries out the reaction a 1,2-diacyl-sn-glycero-3-phospho-(1D-myo-inositol)(in) = a 1,2-diacyl-sn-glycero-3-phospho-(1D-myo-inositol)(out). Its function is as follows. Non-classical phosphatidylinositol (PtdIns) transfer protein (PITP), which exhibits PtdIns-binding/transfer activity in the absence of detectable PtdCho-binding/transfer activity. Regulates PtdIns(4,5)P2 homeostasis at the plasma membrane. Heme-binding protein that may play a role in organic oxidant-induced stress responses. This is Phosphatidylinositol transfer protein SFH5 (SFH5) from Cryptococcus neoformans var. neoformans serotype D (strain B-3501A) (Filobasidiella neoformans).